Reading from the N-terminus, the 207-residue chain is Ras-related protein RABH1d (207 aa).

16–23 is a GTP binding site; sequence GDQSVGKT. Positions 38–46 match the Effector region motif; the sequence is YQATIGIDF. Residues 64 to 68, 122 to 125, and 152 to 153 each bind GTP; these read DTAGQ, NKTD, and SA. Residues Cys205 and Cys207 are each lipidated (S-geranylgeranyl cysteine). Cys207 is subject to Cysteine methyl ester.

The protein belongs to the small GTPase superfamily. Rab family.

Its subcellular location is the golgi apparatus membrane. Functionally, protein transport. Regulator of membrane traffic from the Golgi apparatus towards the endoplasmic reticulum (ER). The chain is Ras-related protein RABH1d (RABH1D) from Arabidopsis thaliana (Mouse-ear cress).